Here is an 80-residue protein sequence, read N- to C-terminus: Acyl carrier protein (80 aa).

Positions 2 to 77 (SDIEQRVKKI…QAIDYAKAHV (76 aa)) constitute a Carrier domain. At serine 37 the chain carries O-(pantetheine 4'-phosphoryl)serine.

The protein belongs to the acyl carrier protein (ACP) family. In terms of processing, 4'-phosphopantetheine is transferred from CoA to a specific serine of apo-ACP by AcpS. This modification is essential for activity because fatty acids are bound in thioester linkage to the sulfhydryl of the prosthetic group.

The protein localises to the cytoplasm. It functions in the pathway lipid metabolism; fatty acid biosynthesis. In terms of biological role, carrier of the growing fatty acid chain in fatty acid biosynthesis. The chain is Acyl carrier protein from Herminiimonas arsenicoxydans.